Consider the following 340-residue polypeptide: Phosphate acyltransferase (340 aa).

Belongs to the PlsX family. As to quaternary structure, homodimer. Probably interacts with PlsY.

It is found in the cytoplasm. The enzyme catalyses a fatty acyl-[ACP] + phosphate = an acyl phosphate + holo-[ACP]. The protein operates within lipid metabolism; phospholipid metabolism. In terms of biological role, catalyzes the reversible formation of acyl-phosphate (acyl-PO(4)) from acyl-[acyl-carrier-protein] (acyl-ACP). This enzyme utilizes acyl-ACP as fatty acyl donor, but not acyl-CoA. This Clostridioides difficile (strain 630) (Peptoclostridium difficile) protein is Phosphate acyltransferase.